We begin with the raw amino-acid sequence, 625 residues long: Chaperone protein HtpG (625 aa).

The segment at 1-341 (MERKEFKAES…SEDLSLNISR (341 aa)) is a; substrate-binding. The interval 342 to 551 (EMLQHDRQLK…EGEVSIEMEK (210 aa)) is b. Residues 552–625 (VLRAMPDNQN…FSNDICKVMA (74 aa)) are c.

This sequence belongs to the heat shock protein 90 family. In terms of assembly, homodimer.

The protein resides in the cytoplasm. Functionally, molecular chaperone. Has ATPase activity. In Halalkalibacterium halodurans (strain ATCC BAA-125 / DSM 18197 / FERM 7344 / JCM 9153 / C-125) (Bacillus halodurans), this protein is Chaperone protein HtpG.